The sequence spans 155 residues: Alanine- and arginine-rich domain-containing protein (155 aa).

In Homo sapiens (Human), this protein is Alanine- and arginine-rich domain-containing protein (AARD).